The primary structure comprises 337 residues: Probable poly [ADP-ribose] polymerase DDB_G0278045 (337 aa).

The PARP catalytic domain occupies 21-231; the sequence is KKWDIIYKQR…NNNKNKNKNN (211 aa). Residues 218-242 show a composition bias toward low complexity; that stretch reads NNTNNNNKNKNKNNNKNNNKNIKIQ. The segment at 218-247 is disordered; it reads NNTNNNNKNKNKNNNKNNNKNIKIQNENKN.

The enzyme catalyses L-aspartyl-[protein] + NAD(+) = 4-O-(ADP-D-ribosyl)-L-aspartyl-[protein] + nicotinamide. It carries out the reaction L-glutamyl-[protein] + NAD(+) = 5-O-(ADP-D-ribosyl)-L-glutamyl-[protein] + nicotinamide. The catalysed reaction is NAD(+) + (ADP-D-ribosyl)n-acceptor = nicotinamide + (ADP-D-ribosyl)n+1-acceptor + H(+).. This is Probable poly [ADP-ribose] polymerase DDB_G0278045 from Dictyostelium discoideum (Social amoeba).